A 644-amino-acid chain; its full sequence is Exoribonuclease 2 (644 aa).

The RNB domain maps to 189–516 (REDLTSLDFV…NHRLLKAVIK (328 aa)). Positions 561 to 643 (GTRFAAEIVD…ETRSIIARPV (83 aa)) constitute an S1 motif domain.

The protein belongs to the RNR ribonuclease family. RNase II subfamily.

The protein localises to the cytoplasm. It catalyses the reaction Exonucleolytic cleavage in the 3'- to 5'-direction to yield nucleoside 5'-phosphates.. Its function is as follows. Involved in mRNA degradation. Hydrolyzes single-stranded polyribonucleotides processively in the 3' to 5' direction. This Shigella flexneri protein is Exoribonuclease 2.